The primary structure comprises 306 residues: Agmatinase (306 aa).

Residues His126, Asp149, His151, Asp153, Asp230, and Asp232 each coordinate Mn(2+).

It belongs to the arginase family. Agmatinase subfamily. Requires Mn(2+) as cofactor.

It catalyses the reaction agmatine + H2O = urea + putrescine. The protein operates within amine and polyamine biosynthesis; putrescine biosynthesis via agmatine pathway; putrescine from agmatine: step 1/1. Functionally, catalyzes the formation of putrescine from agmatine. This chain is Agmatinase, found in Enterobacter sp. (strain 638).